Reading from the N-terminus, the 499-residue chain is Ribulose bisphosphate carboxylase large chain (499 aa).

Residues Asn-139 and Thr-189 each coordinate substrate. The active-site Proton acceptor is the Lys-191. Position 193 (Lys-193) interacts with substrate. 3 residues coordinate Mg(2+): Lys-217, Asp-219, and Glu-220. Lys-217 carries the N6-carboxylysine modification. His-309 serves as the catalytic Proton acceptor. Substrate contacts are provided by Arg-310, His-342, and Ser-394.

It belongs to the RuBisCO large chain family. Type I subfamily. Heterohexadecamer of 8 large chains and 8 small chains. Mg(2+) is required as a cofactor.

The enzyme catalyses 2 (2R)-3-phosphoglycerate + 2 H(+) = D-ribulose 1,5-bisphosphate + CO2 + H2O. The catalysed reaction is D-ribulose 1,5-bisphosphate + O2 = 2-phosphoglycolate + (2R)-3-phosphoglycerate + 2 H(+). Its function is as follows. RuBisCO catalyzes two reactions: the carboxylation of D-ribulose 1,5-bisphosphate, the primary event in carbon dioxide fixation, as well as the oxidative fragmentation of the pentose substrate. Both reactions occur simultaneously and in competition at the same active site. The polypeptide is Ribulose bisphosphate carboxylase large chain (Paraburkholderia xenovorans (strain LB400)).